Here is a 1577-residue protein sequence, read N- to C-terminus: Hemolysin (1577 aa).

Positions 1–29 (MKSKNFKLSPSGRLAASLAIIFVSLNAYG) are cleaved as a signal peptide. Over residues 437–446 (EKESRSENGN) the composition is skewed to basic and acidic residues. 4 disordered regions span residues 437 to 467 (EKES…QTET), 1081 to 1103 (TDTH…GTTP), 1169 to 1188 (QSAS…GVQA), and 1213 to 1232 (KQDE…SGNL). 3 stretches are compositionally biased toward polar residues: residues 454–467 (LESG…QTET), 1081–1095 (TDTH…NGSA), and 1169–1184 (QSAS…NLSG).

The protein resides in the cell outer membrane. Bacterial hemolysins are exotoxins that attack blood cell membranes and cause cell rupture by mechanisms not clearly defined. Its function is as follows. Cell-bound hemolysin, which releases heme-iron from erythrocytes by interaction with the erythrocyte membrane. HpmA requires HpmB function. The protein is Hemolysin (hpmA) of Proteus mirabilis.